The chain runs to 92 residues: Small ribosomal subunit protein uS19 (92 aa).

Belongs to the universal ribosomal protein uS19 family.

Protein S19 forms a complex with S13 that binds strongly to the 16S ribosomal RNA. The polypeptide is Small ribosomal subunit protein uS19 (Mesorhizobium japonicum (strain LMG 29417 / CECT 9101 / MAFF 303099) (Mesorhizobium loti (strain MAFF 303099))).